Here is a 161-residue protein sequence, read N- to C-terminus: Phosphopantetheine adenylyltransferase (161 aa).

Substrate is bound at residue Thr-9. Residues 9–10 (TF) and His-17 contribute to the ATP site. Substrate-binding residues include Lys-41, Leu-73, and Arg-87. Residues 88–90 (GLR), Glu-98, and 123–129 (LSYISST) each bind ATP.

The protein belongs to the bacterial CoaD family. As to quaternary structure, homohexamer. Requires Mg(2+) as cofactor.

Its subcellular location is the cytoplasm. It carries out the reaction (R)-4'-phosphopantetheine + ATP + H(+) = 3'-dephospho-CoA + diphosphate. It functions in the pathway cofactor biosynthesis; coenzyme A biosynthesis; CoA from (R)-pantothenate: step 4/5. In terms of biological role, reversibly transfers an adenylyl group from ATP to 4'-phosphopantetheine, yielding dephospho-CoA (dPCoA) and pyrophosphate. This is Phosphopantetheine adenylyltransferase from Hahella chejuensis (strain KCTC 2396).